The chain runs to 401 residues: 8-amino-7-oxononanoate synthase (401 aa).

Arginine 19 is a substrate binding site. Residue 106-107 coordinates pyridoxal 5'-phosphate; the sequence is GY. Histidine 131 contacts substrate. Pyridoxal 5'-phosphate-binding residues include serine 176, histidine 204, and threonine 233. Lysine 236 bears the N6-(pyridoxal phosphate)lysine mark. Residue threonine 350 coordinates substrate.

The protein belongs to the class-II pyridoxal-phosphate-dependent aminotransferase family. BioF subfamily. As to quaternary structure, homodimer. Requires pyridoxal 5'-phosphate as cofactor.

The catalysed reaction is 6-carboxyhexanoyl-[ACP] + L-alanine + H(+) = (8S)-8-amino-7-oxononanoate + holo-[ACP] + CO2. It functions in the pathway cofactor biosynthesis; biotin biosynthesis. In terms of biological role, catalyzes the decarboxylative condensation of pimeloyl-[acyl-carrier protein] and L-alanine to produce 8-amino-7-oxononanoate (AON), [acyl-carrier protein], and carbon dioxide. The sequence is that of 8-amino-7-oxononanoate synthase from Pseudomonas aeruginosa (strain LESB58).